We begin with the raw amino-acid sequence, 233 residues long: 5'-methylthioadenosine/S-adenosylhomocysteine nucleosidase (233 aa).

Catalysis depends on E12, which acts as the Proton acceptor. Substrate-binding positions include G78, I156, and 177–178 (ME). D201 serves as the catalytic Proton donor.

This sequence belongs to the PNP/UDP phosphorylase family. MtnN subfamily.

The catalysed reaction is S-adenosyl-L-homocysteine + H2O = S-(5-deoxy-D-ribos-5-yl)-L-homocysteine + adenine. The enzyme catalyses S-methyl-5'-thioadenosine + H2O = 5-(methylsulfanyl)-D-ribose + adenine. It catalyses the reaction 5'-deoxyadenosine + H2O = 5-deoxy-D-ribose + adenine. The protein operates within amino-acid biosynthesis; L-methionine biosynthesis via salvage pathway; S-methyl-5-thio-alpha-D-ribose 1-phosphate from S-methyl-5'-thioadenosine (hydrolase route): step 1/2. In terms of biological role, catalyzes the irreversible cleavage of the glycosidic bond in both 5'-methylthioadenosine (MTA) and S-adenosylhomocysteine (SAH/AdoHcy) to adenine and the corresponding thioribose, 5'-methylthioribose and S-ribosylhomocysteine, respectively. Also cleaves 5'-deoxyadenosine, a toxic by-product of radical S-adenosylmethionine (SAM) enzymes, into 5-deoxyribose and adenine. This is 5'-methylthioadenosine/S-adenosylhomocysteine nucleosidase from Listeria innocua serovar 6a (strain ATCC BAA-680 / CLIP 11262).